Consider the following 201-residue polypeptide: Large ribosomal subunit protein mL61 (201 aa).

The interval 87–118 (RDDKDAKPSSTPFPTSSADGSSPAPKPAQGER) is disordered. Over residues 94–106 (PSSTPFPTSSADG) the composition is skewed to polar residues.

It belongs to the mitochondrion-specific ribosomal protein mL61 family. In terms of assembly, component of the mitochondrial large ribosomal subunit (mt-LSU). Mature N.crassa 74S mitochondrial ribosomes consist of a small (37S) and a large (54S) subunit. The 37S small subunit contains a 16S ribosomal RNA (16S mt-rRNA) and 32 different proteins. The 54S large subunit contains a 23S rRNA (23S mt-rRNA) and 42 different proteins.

It is found in the mitochondrion. In terms of biological role, component of the mitochondrial ribosome (mitoribosome), a dedicated translation machinery responsible for the synthesis of mitochondrial genome-encoded proteins, including at least some of the essential transmembrane subunits of the mitochondrial respiratory chain. The mitoribosomes are attached to the mitochondrial inner membrane and translation products are cotranslationally integrated into the membrane. In Neurospora crassa (strain ATCC 24698 / 74-OR23-1A / CBS 708.71 / DSM 1257 / FGSC 987), this protein is Large ribosomal subunit protein mL61 (mrp49).